A 28-amino-acid polypeptide reads, in one-letter code: Phospholipase A2 3 (28 aa).

It belongs to the phospholipase A2 family. Group I subfamily. Ca(2+) serves as cofactor. As to expression, expressed by the venom gland.

It is found in the secreted. It catalyses the reaction a 1,2-diacyl-sn-glycero-3-phosphocholine + H2O = a 1-acyl-sn-glycero-3-phosphocholine + a fatty acid + H(+). In terms of biological role, snake venom phospholipase A2 (PLA2) that inhibits neuromuscular transmission by blocking acetylcholine release from the nerve termini. PLA2 catalyzes the calcium-dependent hydrolysis of the 2-acyl groups in 3-sn-phosphoglycerides. In Micrurus nigrocinctus (Central American coral snake), this protein is Phospholipase A2 3.